The primary structure comprises 299 residues: 4-hydroxy-tetrahydrodipicolinate synthase (299 aa).

Residue Thr-44 coordinates pyruvate. Tyr-133 serves as the catalytic Proton donor/acceptor. Lys-162 (schiff-base intermediate with substrate) is an active-site residue. Ile-204 contributes to the pyruvate binding site.

The protein belongs to the DapA family. In terms of assembly, homotetramer; dimer of dimers.

The protein localises to the cytoplasm. It catalyses the reaction L-aspartate 4-semialdehyde + pyruvate = (2S,4S)-4-hydroxy-2,3,4,5-tetrahydrodipicolinate + H2O + H(+). Its pathway is amino-acid biosynthesis; L-lysine biosynthesis via DAP pathway; (S)-tetrahydrodipicolinate from L-aspartate: step 3/4. Its function is as follows. Catalyzes the condensation of (S)-aspartate-beta-semialdehyde [(S)-ASA] and pyruvate to 4-hydroxy-tetrahydrodipicolinate (HTPA). This chain is 4-hydroxy-tetrahydrodipicolinate synthase, found in Thermus thermophilus (strain ATCC BAA-163 / DSM 7039 / HB27).